Here is a 344-residue protein sequence, read N- to C-terminus: Melanocyte-stimulating hormone receptor (344 aa).

Residues methionine 1–glutamate 37 are Extracellular-facing. N-linked (GlcNAc...) asparagine glycosylation occurs at asparagine 29. The helical transmembrane segment at valine 38–isoleucine 63 threads the bilayer. Residues alanine 64 to serine 72 lie on the Cytoplasmic side of the membrane. The chain crosses the membrane as a helical span at residues methionine 73–leucine 93. Topologically, residues glutamate 94–asparagine 118 are extracellular. Residues threonine 119–valine 140 traverse the membrane as a helical segment. The Cytoplasmic segment spans residues aspartate 141–arginine 163. Residues alanine 164–tyrosine 183 traverse the membrane as a helical segment. The Extracellular portion of the chain corresponds to aspartate 184–cysteine 191. The chain crosses the membrane as a helical span at residues leucine 192 to leucine 211. Over alanine 212–alanine 240 the chain is Cytoplasmic. The chain crosses the membrane as a helical span at residues alanine 241 to phenylalanine 266. At cysteine 267–asparagine 279 the chain is on the extracellular side. The helical transmembrane segment at phenylalanine 280–phenylalanine 300 threads the bilayer. At arginine 301 to proline 344 the chain is on the cytoplasmic side. Cysteine 315 carries S-palmitoyl cysteine lipidation.

It belongs to the G-protein coupled receptor 1 family. In terms of assembly, interacts with MGRN1, but does not undergo MGRN1-mediated ubiquitination; this interaction competes with GNAS-binding and thus inhibits agonist-induced cAMP production. Interacts with OPN3; the interaction results in a decrease in MC1R-mediated cAMP signaling and ultimately a decrease in melanin production in melanocytes.

It localises to the cell membrane. Its function is as follows. Receptor for MSH (alpha, beta and gamma) and ACTH. The activity of this receptor is mediated by G proteins which activate adenylate cyclase. Mediates melanogenesis, the production of eumelanin (black/brown) and phaeomelanin (red/yellow), via regulation of cAMP signaling in melanocytes. The polypeptide is Melanocyte-stimulating hormone receptor (MC1R) (Callimico goeldii (Goeldi's marmoset)).